The sequence spans 127 residues: Glycine cleavage system H protein (127 aa).

In terms of domain architecture, Lipoyl-binding spans 22-104 (EVVIGITHFA…YEGAWMVKVE (83 aa)). Lysine 63 carries the post-translational modification N6-lipoyllysine.

This sequence belongs to the GcvH family. As to quaternary structure, the glycine cleavage system is composed of four proteins: P, T, L and H. The cofactor is (R)-lipoate.

In terms of biological role, the glycine cleavage system catalyzes the degradation of glycine. The H protein shuttles the methylamine group of glycine from the P protein to the T protein. Functionally, is also involved in protein lipoylation via its role as an octanoyl/lipoyl carrier protein intermediate. The sequence is that of Glycine cleavage system H protein from Bacillus cereus (strain ZK / E33L).